Reading from the N-terminus, the 393-residue chain is Envelope glycoprotein M (393 aa).

Over 1 to 14 (MCGPRNAEAVSWRS) the chain is Intravirion. A helical membrane pass occupies residues 15-35 (WLIEVCGFALAALTLVLTLIF). Topologically, residues 36–83 (ASLPEMGFPCFYATVADYDTLNDTSGGVWTRQPLVAPALFLETPTVTS) are virion surface. Residues 84–104 (FFGFTATVLLAHALYAVAGAV) form a helical membrane-spanning segment. Topologically, residues 105–130 (VLRREAGRLAFQPSVVLYAASTVAAP) are intravirion. Residues 131–151 (GTLMLGALCAWTLQAVVLLMA) form a helical membrane-spanning segment. The Virion surface portion of the chain corresponds to 152-154 (HKQ). Residues 155 to 175 (AGLAAAAYITHFVFLALFGAC) form a helical membrane-spanning segment. Residues 176–207 (HACKGTGDVRAALAASPPLRRVAVHARAVVTN) lie on the Intravirion side of the membrane. A helical membrane pass occupies residues 208–228 (VVLGAVGLGAAVVGLMLGVLL). Topologically, residues 229–241 (ANSFHISLWKTAE) are virion surface. A helical membrane pass occupies residues 242–262 (AALAVFTLLALALMVFVEVVV). The Intravirion segment spans residues 263-264 (SG). A helical membrane pass occupies residues 265 to 285 (YVQVLPTPAFCVLVASAAFGV). Topologically, residues 286–303 (SAHRYFAKFSEALGETHG) are virion surface. Residues 304–324 (VVIGTRAVLAVLSLIALAMIV) traverse the membrane as a helical segment. At 325 to 393 (VRLVRACIAH…EVVYENLGFE (69 aa)) the chain is on the intravirion side.

Belongs to the herpesviridae glycoprotein M family. As to quaternary structure, interacts (via N-terminus) with gN (via N-terminus). The gM-gN heterodimer forms the gCII complex.

It localises to the virion membrane. The protein resides in the host Golgi apparatus. Its subcellular location is the host trans-Golgi network. The protein localises to the host endosome membrane. It is found in the host nucleus inner membrane. Its function is as follows. Envelope glycoprotein important for virion assembly and egress. Plays a role in the correct incorporation of gH-gL into virion membrane. Directs the glycoprotein N (gN) to the host trans-Golgi network. The protein is Envelope glycoprotein M of Suid herpesvirus 1 (SuHV-1).